Reading from the N-terminus, the 459-residue chain is Glutamate--tRNA ligase 2 (459 aa).

Positions 8-18 (PSPTGYLHIGG) match the 'HIGH' region motif. The 'KMSKS' region motif lies at 237 to 241 (KLSKR). Position 240 (Lys-240) interacts with ATP.

It belongs to the class-I aminoacyl-tRNA synthetase family. Glutamate--tRNA ligase type 1 subfamily. As to quaternary structure, monomer.

Its subcellular location is the cytoplasm. The enzyme catalyses tRNA(Glu) + L-glutamate + ATP = L-glutamyl-tRNA(Glu) + AMP + diphosphate. Its function is as follows. Catalyzes the attachment of glutamate to tRNA(Glu) in a two-step reaction: glutamate is first activated by ATP to form Glu-AMP and then transferred to the acceptor end of tRNA(Glu). In Campylobacter curvus (strain 525.92), this protein is Glutamate--tRNA ligase 2.